The primary structure comprises 481 residues: RuvB-like helicase 2 (481 aa).

73–80 lines the ATP pocket; sequence GEPSTGKT. Residues 453–481 form a disordered region; sequence EEVERDPAAGGGAKRRVEGGGGDAQPMEH.

This sequence belongs to the RuvB family. Forms homohexameric rings. May form a dodecamer with rept made of two stacked hexameric rings. Component of the chromatin remodeling Ino80 complex. Interacts with Myc and pont. Higher expression occurs in primordia of mesoderm, anterior and posterior midgut and cephalic furrow early in gastrulation, as well as in endoderm and mesoderm lineages during germ band extension. Later in development expression is only maintained in endoderm cells. Expressed in thoracic and abdominal segment neural precursors of all embryonic chordotonal organs.

It localises to the nucleus. It carries out the reaction ATP + H2O = ADP + phosphate + H(+). Acts as a transcriptional coactivator in Wg signaling caused by altered arm signaling. Pont and rept interfere antagonistically with nuclear arm signaling function, and are required to enhance or reduce arm activity, respectively. Also an essential cofactor for the normal function of Myc; required for cellular proliferation and growth. In terms of biological role, proposed core component of the chromatin remodeling Ino80 complex which is involved in transcriptional regulation, DNA replication and probably DNA repair. This is RuvB-like helicase 2 from Drosophila melanogaster (Fruit fly).